We begin with the raw amino-acid sequence, 357 residues long: Probable dual-specificity RNA methyltransferase RlmN (357 aa).

Glu-92 acts as the Proton acceptor in catalysis. Residues 98–336 enclose the Radical SAM core domain; sequence HKYGLSVCVT…CGVRLEHGTD (239 aa). Cysteines 105 and 341 form a disulfide. [4Fe-4S] cluster is bound by residues Cys-112, Cys-116, and Cys-119. S-adenosyl-L-methionine is bound by residues 164-165, Ser-196, 219-221, and Asn-297; these read GE and SLH. Residue Cys-341 is the S-methylcysteine intermediate of the active site.

This sequence belongs to the radical SAM superfamily. RlmN family. It depends on [4Fe-4S] cluster as a cofactor.

The protein resides in the cytoplasm. The catalysed reaction is adenosine(2503) in 23S rRNA + 2 reduced [2Fe-2S]-[ferredoxin] + 2 S-adenosyl-L-methionine = 2-methyladenosine(2503) in 23S rRNA + 5'-deoxyadenosine + L-methionine + 2 oxidized [2Fe-2S]-[ferredoxin] + S-adenosyl-L-homocysteine. It carries out the reaction adenosine(37) in tRNA + 2 reduced [2Fe-2S]-[ferredoxin] + 2 S-adenosyl-L-methionine = 2-methyladenosine(37) in tRNA + 5'-deoxyadenosine + L-methionine + 2 oxidized [2Fe-2S]-[ferredoxin] + S-adenosyl-L-homocysteine. Specifically methylates position 2 of adenine 2503 in 23S rRNA and position 2 of adenine 37 in tRNAs. The chain is Probable dual-specificity RNA methyltransferase RlmN from Exiguobacterium sibiricum (strain DSM 17290 / CCUG 55495 / CIP 109462 / JCM 13490 / 255-15).